A 435-amino-acid polypeptide reads, in one-letter code: U-box domain-containing protein 36 (435 aa).

A coiled-coil region spans residues 227–345 (EAEASKRKAR…LKGKREEEEA (119 aa)). Residues 352-426 (EPPQYFICPI…QEWLQLRELL (75 aa)) enclose the U-box domain.

It catalyses the reaction S-ubiquitinyl-[E2 ubiquitin-conjugating enzyme]-L-cysteine + [acceptor protein]-L-lysine = [E2 ubiquitin-conjugating enzyme]-L-cysteine + N(6)-ubiquitinyl-[acceptor protein]-L-lysine.. It participates in protein modification; protein ubiquitination. Its function is as follows. Functions as an E3 ubiquitin ligase. The chain is U-box domain-containing protein 36 (PUB36) from Arabidopsis thaliana (Mouse-ear cress).